Here is a 298-residue protein sequence, read N- to C-terminus: Probable endonuclease 4 (298 aa).

Positions 69, 111, 146, 180, 183, 215, 228, 230, and 260 each coordinate Zn(2+).

This sequence belongs to the AP endonuclease 2 family. Requires Zn(2+) as cofactor.

It catalyses the reaction Endonucleolytic cleavage to 5'-phosphooligonucleotide end-products.. Its function is as follows. Endonuclease IV plays a role in DNA repair. It cleaves phosphodiester bonds at apurinic or apyrimidinic (AP) sites, generating a 3'-hydroxyl group and a 5'-terminal sugar phosphate. The protein is Probable endonuclease 4 of Bacillus mycoides (strain KBAB4) (Bacillus weihenstephanensis).